Reading from the N-terminus, the 417-residue chain is MKNYTELLKSELIMALGCTEPISIALAAAKAREVLGDIPTKIEVKCSGNIIKNVKGVTVPNTNGMKGVEAATAIGTVAGDSSLGLEVLSKVTDEDIKAAKCMLDNNIIKVSLKEGVENLDIEIVAEDDKENTVDVEIKNKHTNIVKVTKNDKVIHIDNCYTHTPEYENYDELSVKDIFEYANNVDLDEVRDLLEDQITLNSKISDEGLTGKWGVAMGKILMDEDDSIRSKAKARAAAGSDARMSGCSLPVVINAGSGNQGITCTMPLVVFANEKNYDRETLYRGLLITNLVALHIKRFIGRLSAFCGVTSAGVAAGAGICYMETKNLDLIEKTIGNALMIASGMICDGAKPSCAAKIATAVDAGISGYYLAKNNRNFEAGDGLLKDDIEETIRSIGYVAKEGMKETDIVVLHTMIEK.

It belongs to the UPF0597 family.

The polypeptide is UPF0597 protein FMG_0209 (Finegoldia magna (strain ATCC 29328 / DSM 20472 / WAL 2508) (Peptostreptococcus magnus)).